The sequence spans 69 residues: Conotoxin LvVID (69 aa).

A signal peptide spans 1 to 17 (VLIIAVLFLTACQLTTA). Positions 18 to 40 (ETYPRGQQRHHALRSTDKNSKLT) are excised as a propeptide. Disulfide bonds link Cys-43–Cys-57, Cys-50–Cys-61, and Cys-56–Cys-68.

The protein belongs to the conotoxin O1 superfamily. In terms of tissue distribution, expressed by the venom duct.

The protein resides in the secreted. The polypeptide is Conotoxin LvVID (Conus lividus (Livid cone)).